A 151-amino-acid chain; its full sequence is Large ribosomal subunit protein bL9 (151 aa).

The protein belongs to the bacterial ribosomal protein bL9 family.

Its function is as follows. Binds to the 23S rRNA. This chain is Large ribosomal subunit protein bL9, found in Desulfosudis oleivorans (strain DSM 6200 / JCM 39069 / Hxd3) (Desulfococcus oleovorans).